Here is a 74-residue protein sequence, read N- to C-terminus: Kappa-stichotoxin-Sgt4a (74 aa).

An N-terminal signal peptide occupies residues 1 to 22 (MKFQVIAAVLLIEFCLCVVVTA). Residues 23–39 (RMELQDVEDVENGFQKR) constitute a propeptide that is removed on maturation. In terms of domain architecture, ShKT spans 42 to 74 (CIDTIPQSRCTAFQCKHSMKYRLSFCRKTCGTC). 3 disulfide bridges follow: Cys-42–Cys-74, Cys-51–Cys-67, and Cys-56–Cys-71.

It belongs to the sea anemone type 1 potassium channel toxin family. Type 1a subfamily.

It localises to the secreted. The protein resides in the nematocyst. Functionally, inhibits voltage-gated potassium channels (Kv) with higher potency for Kv1.1/KCNA1 and Kv1.3/KCNA3. This is Kappa-stichotoxin-Sgt4a from Stichodactyla gigantea (Giant carpet anemone).